The primary structure comprises 245 residues: 1-(5-phosphoribosyl)-5-[(5-phosphoribosylamino)methylideneamino] imidazole-4-carboxamide isomerase (245 aa).

D11 serves as the catalytic Proton acceptor. The active-site Proton donor is the D132.

Belongs to the HisA/HisF family.

It is found in the cytoplasm. It carries out the reaction 1-(5-phospho-beta-D-ribosyl)-5-[(5-phospho-beta-D-ribosylamino)methylideneamino]imidazole-4-carboxamide = 5-[(5-phospho-1-deoxy-D-ribulos-1-ylimino)methylamino]-1-(5-phospho-beta-D-ribosyl)imidazole-4-carboxamide. It functions in the pathway amino-acid biosynthesis; L-histidine biosynthesis; L-histidine from 5-phospho-alpha-D-ribose 1-diphosphate: step 4/9. This chain is 1-(5-phosphoribosyl)-5-[(5-phosphoribosylamino)methylideneamino] imidazole-4-carboxamide isomerase, found in Bacillus licheniformis (strain ATCC 14580 / DSM 13 / JCM 2505 / CCUG 7422 / NBRC 12200 / NCIMB 9375 / NCTC 10341 / NRRL NRS-1264 / Gibson 46).